The chain runs to 257 residues: Transmembrane protein 101 (257 aa).

Transmembrane regions (helical) follow at residues 24–40 (TRCPFWGCFSQLMLYAE), 52–72 (VPYLYFDMGAAVLCASFMSFG), 77–97 (WFALGAALQLAISTYTAYIGG), 110–130 (YSRTVAIIGGFLVLASGAGEL), 139–159 (SLQSTGQVFLGIYLICVAYSL), 182–202 (LFFVLYGVLALAFLSGYYVTL), 206–226 (ILAVLLPPVMLLIDGNVSYWH), and 233–253 (FWNQMKLLGESVGIFGAAVIL).

The protein resides in the membrane. In terms of biological role, may activate NF-kappa-B signaling pathways. In Mus musculus (Mouse), this protein is Transmembrane protein 101 (Tmem101).